The chain runs to 270 residues: Hydroxyethylthiazole kinase (270 aa).

Methionine 47 contributes to the substrate binding site. Positions 123 and 170 each coordinate ATP. Glycine 197 is a substrate binding site.

Belongs to the Thz kinase family. Mg(2+) is required as a cofactor.

The catalysed reaction is 5-(2-hydroxyethyl)-4-methylthiazole + ATP = 4-methyl-5-(2-phosphooxyethyl)-thiazole + ADP + H(+). Its pathway is cofactor biosynthesis; thiamine diphosphate biosynthesis; 4-methyl-5-(2-phosphoethyl)-thiazole from 5-(2-hydroxyethyl)-4-methylthiazole: step 1/1. Functionally, catalyzes the phosphorylation of the hydroxyl group of 4-methyl-5-beta-hydroxyethylthiazole (THZ). In Syntrophus aciditrophicus (strain SB), this protein is Hydroxyethylthiazole kinase.